A 414-amino-acid chain; its full sequence is Phosphoglycerate kinase (414 aa).

Substrate contacts are provided by residues 20–22, Arg37, 60–63, Arg117, and Arg164; these read DIN and HQSR. Residues Glu338 and 364–367 each bind ATP; that span reads GGHL.

It belongs to the phosphoglycerate kinase family. In terms of assembly, monomer.

The protein localises to the cytoplasm. It catalyses the reaction (2R)-3-phosphoglycerate + ATP = (2R)-3-phospho-glyceroyl phosphate + ADP. Its pathway is carbohydrate degradation; glycolysis; pyruvate from D-glyceraldehyde 3-phosphate: step 2/5. The polypeptide is Phosphoglycerate kinase (Methanococcus maripaludis (strain DSM 14266 / JCM 13030 / NBRC 101832 / S2 / LL)).